The chain runs to 603 residues: Arginine--tRNA ligase (603 aa).

A 'HIGH' region motif is present at residues 143–153; sequence PNIAKEMHVGH.

Belongs to the class-I aminoacyl-tRNA synthetase family. In terms of assembly, monomer.

The protein resides in the cytoplasm. It catalyses the reaction tRNA(Arg) + L-arginine + ATP = L-arginyl-tRNA(Arg) + AMP + diphosphate. This chain is Arginine--tRNA ligase, found in Prochlorococcus marinus (strain MIT 9211).